A 65-amino-acid chain; its full sequence is Small vasohibin-binding protein (65 aa).

Over residues 1–22 the composition is skewed to basic and acidic residues; it reads MEPACRKDKQKQQTPTRGDRTK. The tract at residues 1 to 30 is disordered; the sequence is MEPACRKDKQKQQTPTRGDRTKQKTAQQEL. Positions 31–51 form a coiled coil; that stretch reads KQRQRAEIYALNKVMTELEQQ.

Belongs to the SVBP family.

The protein localises to the cytoplasm. Its subcellular location is the secreted. It is found in the cytoskeleton. In terms of biological role, enhances the tyrosine carboxypeptidase activity of vash1 and vash2, thereby promoting the removal of the C-terminal tyrosine residue of alpha-tubulin. Also required to enhance the solubility and secretion of vash1 and vash2. May play a role in axon and excitatory synapse formation. In Danio rerio (Zebrafish), this protein is Small vasohibin-binding protein.